Consider the following 189-residue polypeptide: Large ribosomal subunit protein uL5 (189 aa).

Belongs to the universal ribosomal protein uL5 family. In terms of assembly, part of the 50S ribosomal subunit; part of the 5S rRNA/L5/L18/L25 subcomplex. Contacts the 5S rRNA and the P site tRNA. Forms a bridge to the 30S subunit in the 70S ribosome.

Its function is as follows. This is one of the proteins that bind and probably mediate the attachment of the 5S RNA into the large ribosomal subunit, where it forms part of the central protuberance. In the 70S ribosome it contacts protein S13 of the 30S subunit (bridge B1b), connecting the 2 subunits; this bridge is implicated in subunit movement. Contacts the P site tRNA; the 5S rRNA and some of its associated proteins might help stabilize positioning of ribosome-bound tRNAs. The polypeptide is Large ribosomal subunit protein uL5 (Corynebacterium jeikeium (strain K411)).